A 100-amino-acid chain; its full sequence is Putative septation protein SpoVG (100 aa).

It belongs to the SpoVG family.

In terms of biological role, could be involved in septation. The protein is Putative septation protein SpoVG of Clostridium novyi (strain NT).